A 157-amino-acid chain; its full sequence is Peptide methionine sulfoxide reductase MsrB (157 aa).

Residues 14–137 (DNDLRERLTP…NSAALRFVPL (124 aa)) enclose the MsrB domain. Cys126 (nucleophile) is an active-site residue.

It belongs to the MsrB Met sulfoxide reductase family.

It catalyses the reaction L-methionyl-[protein] + [thioredoxin]-disulfide + H2O = L-methionyl-(R)-S-oxide-[protein] + [thioredoxin]-dithiol. The protein is Peptide methionine sulfoxide reductase MsrB of Deinococcus radiodurans (strain ATCC 13939 / DSM 20539 / JCM 16871 / CCUG 27074 / LMG 4051 / NBRC 15346 / NCIMB 9279 / VKM B-1422 / R1).